Consider the following 151-residue polypeptide: Phosphoribosyl-AMP cyclohydrolase (151 aa).

A compositionally biased stretch (polar residues) spans 1 to 13 (MMTLTFASPPQNK). Residues 1–20 (MMTLTFASPPQNKSDLETGP) are disordered. Mg(2+) is bound at residue Asp-93. Zn(2+) is bound at residue Cys-94. Positions 95 and 97 each coordinate Mg(2+). Zn(2+) contacts are provided by Cys-112 and Cys-119.

This sequence belongs to the PRA-CH family. In terms of assembly, homodimer. Requires Mg(2+) as cofactor. It depends on Zn(2+) as a cofactor.

Its subcellular location is the cytoplasm. The catalysed reaction is 1-(5-phospho-beta-D-ribosyl)-5'-AMP + H2O = 1-(5-phospho-beta-D-ribosyl)-5-[(5-phospho-beta-D-ribosylamino)methylideneamino]imidazole-4-carboxamide. It functions in the pathway amino-acid biosynthesis; L-histidine biosynthesis; L-histidine from 5-phospho-alpha-D-ribose 1-diphosphate: step 3/9. Catalyzes the hydrolysis of the adenine ring of phosphoribosyl-AMP. In Sinorhizobium medicae (strain WSM419) (Ensifer medicae), this protein is Phosphoribosyl-AMP cyclohydrolase.